Reading from the N-terminus, the 193-residue chain is 7-methyl-GTP pyrophosphatase (193 aa).

Asp70 serves as the catalytic Proton acceptor.

The protein belongs to the Maf family. YceF subfamily. It depends on a divalent metal cation as a cofactor.

It is found in the cytoplasm. The enzyme catalyses N(7)-methyl-GTP + H2O = N(7)-methyl-GMP + diphosphate + H(+). Nucleoside triphosphate pyrophosphatase that hydrolyzes 7-methyl-GTP (m(7)GTP). May have a dual role in cell division arrest and in preventing the incorporation of modified nucleotides into cellular nucleic acids. This is 7-methyl-GTP pyrophosphatase from Photobacterium profundum (strain SS9).